Here is a 98-residue protein sequence, read N- to C-terminus: Integration host factor subunit alpha (98 aa).

Basic and acidic residues predominate over residues 53-69 (DLREKSERPGRNPKTGE). The interval 53–73 (DLREKSERPGRNPKTGEDIPI) is disordered.

This sequence belongs to the bacterial histone-like protein family. In terms of assembly, heterodimer of an alpha and a beta chain.

In terms of biological role, this protein is one of the two subunits of integration host factor, a specific DNA-binding protein that functions in genetic recombination as well as in transcriptional and translational control. This chain is Integration host factor subunit alpha, found in Aliivibrio fischeri (strain ATCC 700601 / ES114) (Vibrio fischeri).